Consider the following 643-residue polypeptide: 1-deoxy-D-xylulose-5-phosphate synthase (643 aa).

Thiamine diphosphate-binding positions include H72 and 113–115 (GHA). D144 contacts Mg(2+). Thiamine diphosphate is bound by residues 145–146 (GA), N174, Y287, and E370. A Mg(2+)-binding site is contributed by N174.

The protein belongs to the transketolase family. DXPS subfamily. As to quaternary structure, homodimer. Mg(2+) is required as a cofactor. It depends on thiamine diphosphate as a cofactor.

It catalyses the reaction D-glyceraldehyde 3-phosphate + pyruvate + H(+) = 1-deoxy-D-xylulose 5-phosphate + CO2. It functions in the pathway metabolic intermediate biosynthesis; 1-deoxy-D-xylulose 5-phosphate biosynthesis; 1-deoxy-D-xylulose 5-phosphate from D-glyceraldehyde 3-phosphate and pyruvate: step 1/1. In terms of biological role, catalyzes the acyloin condensation reaction between C atoms 2 and 3 of pyruvate and glyceraldehyde 3-phosphate to yield 1-deoxy-D-xylulose-5-phosphate (DXP). The sequence is that of 1-deoxy-D-xylulose-5-phosphate synthase from Synechococcus sp. (strain CC9605).